A 921-amino-acid polypeptide reads, in one-letter code: Isoleucine--tRNA ligase (921 aa).

A 'HIGH' region motif is present at residues 59 to 69 (PYANGHLHIGH). Glutamate 569 lines the L-isoleucyl-5'-AMP pocket. The 'KMSKS' region motif lies at 610–614 (KMSKS). Lysine 613 is a binding site for ATP. Positions 894, 897, 909, and 912 each coordinate Zn(2+).

The protein belongs to the class-I aminoacyl-tRNA synthetase family. IleS type 1 subfamily. In terms of assembly, monomer. The cofactor is Zn(2+).

Its subcellular location is the cytoplasm. It carries out the reaction tRNA(Ile) + L-isoleucine + ATP = L-isoleucyl-tRNA(Ile) + AMP + diphosphate. Functionally, catalyzes the attachment of isoleucine to tRNA(Ile). As IleRS can inadvertently accommodate and process structurally similar amino acids such as valine, to avoid such errors it has two additional distinct tRNA(Ile)-dependent editing activities. One activity is designated as 'pretransfer' editing and involves the hydrolysis of activated Val-AMP. The other activity is designated 'posttransfer' editing and involves deacylation of mischarged Val-tRNA(Ile). The protein is Isoleucine--tRNA ligase of Campylobacter lari (strain RM2100 / D67 / ATCC BAA-1060).